Here is a 200-residue protein sequence, read N- to C-terminus: LexA repressor (200 aa).

A DNA-binding region (H-T-H motif) is located at residues 28-48; that stretch reads RAEIARILGFKSANAAEEHIK. Residues serine 118 and lysine 155 each act as for autocatalytic cleavage activity in the active site.

It belongs to the peptidase S24 family. As to quaternary structure, homodimer.

The catalysed reaction is Hydrolysis of Ala-|-Gly bond in repressor LexA.. Its function is as follows. Represses a number of genes involved in the response to DNA damage (SOS response), including recA and lexA. In the presence of single-stranded DNA, RecA interacts with LexA causing an autocatalytic cleavage which disrupts the DNA-binding part of LexA, leading to derepression of the SOS regulon and eventually DNA repair. The chain is LexA repressor from Cellvibrio japonicus (strain Ueda107) (Pseudomonas fluorescens subsp. cellulosa).